Consider the following 338-residue polypeptide: Ketol-acid reductoisomerase (NADP(+)) (338 aa).

Positions 1–181 (MKVFYDKDCD…GGGRTGIIET (181 aa)) constitute a KARI N-terminal Rossmann domain. NADP(+) contacts are provided by residues 24 to 27 (YGSQ), Arg47, Ser50, Thr52, and 82 to 85 (DEFQ). His107 is an active-site residue. Gly133 is a binding site for NADP(+). The KARI C-terminal knotted domain maps to 182 to 327 (TFKDETETDL…EQLRSMMPWI (146 aa)). Mg(2+) is bound by residues Asp190, Glu194, Glu226, and Glu230. Ser251 is a substrate binding site.

This sequence belongs to the ketol-acid reductoisomerase family. Requires Mg(2+) as cofactor.

It catalyses the reaction (2R)-2,3-dihydroxy-3-methylbutanoate + NADP(+) = (2S)-2-acetolactate + NADPH + H(+). The enzyme catalyses (2R,3R)-2,3-dihydroxy-3-methylpentanoate + NADP(+) = (S)-2-ethyl-2-hydroxy-3-oxobutanoate + NADPH + H(+). Its pathway is amino-acid biosynthesis; L-isoleucine biosynthesis; L-isoleucine from 2-oxobutanoate: step 2/4. The protein operates within amino-acid biosynthesis; L-valine biosynthesis; L-valine from pyruvate: step 2/4. Its function is as follows. Involved in the biosynthesis of branched-chain amino acids (BCAA). Catalyzes an alkyl-migration followed by a ketol-acid reduction of (S)-2-acetolactate (S2AL) to yield (R)-2,3-dihydroxy-isovalerate. In the isomerase reaction, S2AL is rearranged via a Mg-dependent methyl migration to produce 3-hydroxy-3-methyl-2-ketobutyrate (HMKB). In the reductase reaction, this 2-ketoacid undergoes a metal-dependent reduction by NADPH to yield (R)-2,3-dihydroxy-isovalerate. In Pseudomonas entomophila (strain L48), this protein is Ketol-acid reductoisomerase (NADP(+)).